We begin with the raw amino-acid sequence, 392 residues long: S-adenosylmethionine decarboxylase proenzyme (392 aa).

Residues Glu43 and Glu46 contribute to the active site. Residue Ser100 is the Schiff-base intermediate with substrate; via pyruvic acid of the active site. Position 100 is a pyruvic acid (Ser); by autocatalysis (Ser100). Catalysis depends on Cys114, which acts as the Proton donor; for catalytic activity. Catalysis depends on proton acceptor; for processing activity residues Ser264 and His277.

This sequence belongs to the eukaryotic AdoMetDC family. The cofactor is pyruvate. Post-translationally, is synthesized initially as an inactive proenzyme. Formation of the active enzyme involves a self-maturation process in which the active site pyruvoyl group is generated from an internal serine residue via an autocatalytic post-translational modification. Two non-identical subunits are generated from the proenzyme in this reaction, and the pyruvate is formed at the N-terminus of the alpha chain, which is derived from the carboxyl end of the proenzyme. The post-translation cleavage follows an unusual pathway, termed non-hydrolytic serinolysis, in which the side chain hydroxyl group of the serine supplies its oxygen atom to form the C-terminus of the beta chain, while the remainder of the serine residue undergoes an oxidative deamination to produce ammonia and the pyruvoyl group blocking the N-terminus of the alpha chain.

It catalyses the reaction S-adenosyl-L-methionine + H(+) = S-adenosyl 3-(methylsulfanyl)propylamine + CO2. It functions in the pathway amine and polyamine biosynthesis; S-adenosylmethioninamine biosynthesis; S-adenosylmethioninamine from S-adenosyl-L-methionine: step 1/1. The protein is S-adenosylmethionine decarboxylase proenzyme of Leishmania infantum.